Reading from the N-terminus, the 467-residue chain is MKFSSTTLLAGLSSLTATVSAGCSFEGGNYYCSETKKVIYKGIGFSGTYMDVTNMDESTGKCTQQSYSFSGNLSPLDEELSVHFRGPLTLLQFGVYYPSSSGNSKRQIDDQDCNVKHVHHKHKRATEVVQVTQTVFVDGNGNTVTSQALQTSTVESSPAVSSAAADDNANSGSGSGSSAGSGSGYGSVSALDGEGKAYRSDISTKSAPTSTSAQPSSSETASVDGAWTRDSYYTPGSTDNCVFLNYHGGSGSGVWSAKFGNSLSYANADNSGGSSTPVPLEETTIKSGEEYIIFSGSKCGSSSDCGYYRKGTVAYHGFKGASKIFVFEFEMPSDTNGNGYNQDMPAVWLLNAKIPRTLQYGEATCSCWKTGCGELDLFEVLSSGSNKMISHLHDGQGSSQNSNNGGGGSQDYFERPTSGTFKGVVIFEGDEIHILQVDDETEFGSSLDEETVNAWLKEAGSVATIGY.

Residues 1 to 21 (MKFSSTTLLAGLSSLTATVSA) form the signal peptide. Residues 158-172 (PAVSSAAADDNANSG) show a composition bias toward low complexity. Disordered regions lie at residues 158–187 (PAVS…GYGS) and 200–223 (SDIS…TASV). Residues 173 to 185 (SGSGSSAGSGSGY) are compositionally biased toward gly residues. The segment covering 203 to 222 (STKSAPTSTSAQPSSSETAS) has biased composition (low complexity). Residues 374-379 (ELDLFE) carry the ExDxxE motif motif. Residues 391–413 (HLHDGQGSSQNSNNGGGGSQDYF) form a disordered region.

This sequence belongs to the PGA52 family. Post-translationally, cleaved by KEX2 in vitro.

Its subcellular location is the secreted. The enzyme catalyses Hydrolysis of (1-&gt;3)-beta-D-glucosidic linkages in (1-&gt;3)-beta-D-glucans.. In terms of biological role, probable circularly permuted 1,3-beta-glucanase involved in cell wall modification through beta-1,3-glucan network alterations such as increased branching or remodeling. Plays a role in engulfment by host macrophages. The sequence is that of Probable circularly permuted 1,3-beta-glucanase TOS1 from Candida albicans (strain SC5314 / ATCC MYA-2876) (Yeast).